The following is a 635-amino-acid chain: 1-deoxy-D-xylulose-5-phosphate synthase (635 aa).

Thiamine diphosphate-binding positions include His78 and 119–121; that span reads GHA. Mg(2+) is bound at residue Asp151. Thiamine diphosphate is bound by residues 152 to 153, Asn180, and Tyr291; that span reads GA. Asn180 contributes to the Mg(2+) binding site. Residues 305–325 form a disordered region; sequence PAFEDRGGTPVTRGSDGRPPY. Residue Glu374 participates in thiamine diphosphate binding.

Belongs to the transketolase family. DXPS subfamily. In terms of assembly, homodimer. It depends on Mg(2+) as a cofactor. Thiamine diphosphate is required as a cofactor.

The catalysed reaction is D-glyceraldehyde 3-phosphate + pyruvate + H(+) = 1-deoxy-D-xylulose 5-phosphate + CO2. It participates in metabolic intermediate biosynthesis; 1-deoxy-D-xylulose 5-phosphate biosynthesis; 1-deoxy-D-xylulose 5-phosphate from D-glyceraldehyde 3-phosphate and pyruvate: step 1/1. Its function is as follows. Catalyzes the acyloin condensation reaction between C atoms 2 and 3 of pyruvate and glyceraldehyde 3-phosphate to yield 1-deoxy-D-xylulose-5-phosphate (DXP). The chain is 1-deoxy-D-xylulose-5-phosphate synthase from Rhodopirellula baltica (strain DSM 10527 / NCIMB 13988 / SH1).